A 106-amino-acid polypeptide reads, in one-letter code: Phosphoribosyl-ATP pyrophosphatase 1 (106 aa).

It belongs to the PRA-PH family.

The protein resides in the cytoplasm. It carries out the reaction 1-(5-phospho-beta-D-ribosyl)-ATP + H2O = 1-(5-phospho-beta-D-ribosyl)-5'-AMP + diphosphate + H(+). It participates in amino-acid biosynthesis; L-histidine biosynthesis; L-histidine from 5-phospho-alpha-D-ribose 1-diphosphate: step 2/9. The protein is Phosphoribosyl-ATP pyrophosphatase 1 (hisE1) of Bradyrhizobium diazoefficiens (strain JCM 10833 / BCRC 13528 / IAM 13628 / NBRC 14792 / USDA 110).